The primary structure comprises 101 residues: Small ribosomal subunit protein eS24 (101 aa).

Belongs to the eukaryotic ribosomal protein eS24 family.

The sequence is that of Small ribosomal subunit protein eS24 from Methanosarcina barkeri (strain Fusaro / DSM 804).